Reading from the N-terminus, the 119-residue chain is NADH-quinone oxidoreductase subunit A (119 aa).

3 helical membrane-spanning segments follow: residues 9-29 (IFLF…LGYI), 63-83 (LVAI…PWAV), and 88-108 (IGAL…VGFI).

This sequence belongs to the complex I subunit 3 family. NDH-1 is composed of 14 different subunits. Subunits NuoA, H, J, K, L, M, N constitute the membrane sector of the complex.

It is found in the cell inner membrane. The enzyme catalyses a quinone + NADH + 5 H(+)(in) = a quinol + NAD(+) + 4 H(+)(out). Functionally, NDH-1 shuttles electrons from NADH, via FMN and iron-sulfur (Fe-S) centers, to quinones in the respiratory chain. The immediate electron acceptor for the enzyme in this species is believed to be ubiquinone. Couples the redox reaction to proton translocation (for every two electrons transferred, four hydrogen ions are translocated across the cytoplasmic membrane), and thus conserves the redox energy in a proton gradient. The sequence is that of NADH-quinone oxidoreductase subunit A from Albidiferax ferrireducens (strain ATCC BAA-621 / DSM 15236 / T118) (Rhodoferax ferrireducens).